The chain runs to 289 residues: Melatonin receptor type 1B (289 aa).

Residues 1-2 (GN) are Cytoplasmic-facing. The helical transmembrane segment at 3 to 23 (AFVVSLALADLVVALYPYPLV) threads the bilayer. Residues 24-41 (LLAIFHNGWTLGEMHCKV) are Extracellular-facing. Cys39 and Cys116 form a disulfide bridge. The chain crosses the membrane as a helical span at residues 42–62 (SGFVMGLSVIGSIFNITAIAI). The Cytoplasmic portion of the chain corresponds to 63–81 (NRYCYICHSFAYDKVYSCW). Residues 82–102 (NTMLYVSLIWVLTVIATVPNF) traverse the membrane as a helical segment. At 103 to 126 (FVGSLKYDPRIYSCTFVQTASSYY) the chain is on the extracellular side. Residues 127 to 147 (TIAVVVIHFIVPITVVSFCYL) form a helical membrane-spanning segment. At 148–179 (RIWVLVLQVRRRVKSETKPRLKPSDFRNFLTM) the chain is on the cytoplasmic side. The helical transmembrane segment at 180–200 (FVVFVIFAFCWAPLNFIGLAV) threads the bilayer. The Extracellular segment spans residues 201–213 (AINPSEMAPKVPE). The chain crosses the membrane as a helical span at residues 214–234 (WLFIISYFMAYFNSCLNAIIY). Residues 235–289 (GLLNQNFRNEYKRILMSLWMPRLFFQDTSKGGTDGQKSKPSPALNNNDQMKTDTL) are Cytoplasmic-facing. Residues 264-289 (KGGTDGQKSKPSPALNNNDQMKTDTL) form a disordered region.

Belongs to the G-protein coupled receptor 1 family. Brain and kidney, with trace levels in lungs.

Its subcellular location is the cell membrane. In terms of biological role, high affinity receptor for melatonin. The activity of this receptor is mediated by pertussis toxin sensitive G proteins that inhibits adenylate cyclase activity. In Gallus gallus (Chicken), this protein is Melatonin receptor type 1B.